A 69-amino-acid chain; its full sequence is Large ribosomal subunit protein uL29 (69 aa).

Belongs to the universal ribosomal protein uL29 family.

This is Large ribosomal subunit protein uL29 from Mycoplasmopsis agalactiae (strain NCTC 10123 / CIP 59.7 / PG2) (Mycoplasma agalactiae).